Here is a 597-residue protein sequence, read N- to C-terminus: uncharacterized protein (597 aa).

Residues 16-78 enclose the PWWP domain; that stretch reads VGRLVWVRRR…LENSKTVKAF (63 aa). Disordered stretches follow at residues 126 to 210 and 449 to 482; these read NLCN…MRGL and QLKGKRNSRQMSKKQEERRNVYGEEANNNSSTPH. Positions 134–143 are enriched in basic and acidic residues; sequence EDSKRCLSGK. Positions 144-161 are enriched in acidic residues; that stretch reads EDEDSGSSDAEETEDDEL. The span at 166–185 shows a compositional bias: polar residues; sequence EQLQSSISSQEMNNVGASKV. Residues 450–460 show a composition bias toward basic residues; that stretch reads LKGKRNSRQMS. Over residues 461-470 the composition is skewed to basic and acidic residues; that stretch reads KKQEERRNVY.

This is an uncharacterized protein from Arabidopsis thaliana (Mouse-ear cress).